A 442-amino-acid chain; its full sequence is MATVLIVGRPNVGKSTLFNRLVGGRRAIIDDQPGVTRDFVFGRVFWQHKSFEVVDTCGLFDSPKDIIEEKMKEVTLALLSEGDLLLFVVDGRKGLTSADMDIAETLRKSKKRVILVANKVENVDKFTLEVLPELYSLGFGEPIPISAEHGLNIDVLLEKIIKTLEEAGHLLDYEPEKEEDNLKVAIIGKPNAGKSSLFNSIVGSDRSLVTEIPGTTRDMVDETIEIDGMPVTFIDTAGMRRKSKVGVKNVEYYSVMRAVDAIERSDICILVIDATLGISNQDQRIAGLVEKRGKGIITVFNKSDLLNEKHKESLLSSFERELYFIDYSPVVFTSATEGFGIDELLDKLFLVAEKIDLRIPTGLLNNLISRYTLSTPPVGRKNKKAKIYYAAQIDTRPPLIMLKVNDPALFTEPYLRGIRSTIRMNIDPFEGTPIFIKLRRKK.

2 EngA-type G domains span residues 2–168 and 182–356; these read ATVL…EEAG and LKVA…EKID. GTP is bound by residues 8–15, 55–59, 118–121, 188–195, 235–239, and 301–304; these read GRPNVGKS, DTCGL, NKVE, GKPNAGKS, DTAGM, and NKSD. The 86-residue stretch at 357-442 folds into the KH-like domain; that stretch reads LRIPTGLLNN…PIFIKLRRKK (86 aa).

It belongs to the TRAFAC class TrmE-Era-EngA-EngB-Septin-like GTPase superfamily. EngA (Der) GTPase family. In terms of assembly, associates with the 50S ribosomal subunit.

GTPase that plays an essential role in the late steps of ribosome biogenesis. This is GTPase Der from Kosmotoga olearia (strain ATCC BAA-1733 / DSM 21960 / TBF 19.5.1).